Reading from the N-terminus, the 70-residue chain is Brevinin-1CG3 (70 aa).

The first 22 residues, 1–22 (MFTLKKSLLLLFFLGTINLSLC), serve as a signal peptide directing secretion. Residues 23-44 (EQERNAEEERRDDSDKRDVEVE) constitute a propeptide, removed in mature form. A disulfide bond links C64 and C70.

The protein belongs to the frog skin active peptide (FSAP) family. Brevinin subfamily. Expressed by the skin glands.

The protein localises to the secreted. Functionally, antimicrobial peptide active against a variety of Gram-positive and some Gram-negative bacterial strains. Has antifungal activity against a slime mold isolate. Has hemolytic activity against human erythrocytes. The chain is Brevinin-1CG3 from Amolops chunganensis (Chungan torrent frog).